A 1073-amino-acid chain; its full sequence is Serine/threonine-protein phosphatase 6 regulatory ankyrin repeat subunit C (1073 aa).

ANK repeat units follow at residues 7-36, 40-69, 73-102, 106-135, 139-168, 172-201, 205-234, 238-267, 271-301, 305-334, 338-367, 371-400, 422-451, 455-484, 488-544, 548-578, 583-612, 616-645, 650-679, 686-715, 719-748, 752-781, 789-818, 821-851, 856-885, 889-919, 923-952, and 959-988; these read TDQPPLVQAIFNRDVEEVRSLLNQKENINV, ERRTPLHTAAYIGDVAILELLILSGANVNA, VWLTPLHRAAASRNEKALHLLLKHSADVNA, YWQTPLHVAAANRATKCVEAIIPLLSTVNV, TGRTALHHAVHSGHLEMVNLLLNKGASLST, KDRQPIHWAAFLGHLEVLKLLVARGADVMC, KGYTLLHTAAASGQIEVVRHLLRLGVEIDE, FGNTALHIACYMGQDAVANELVNYGANVNQ, KGFTPLHFAAVSTNGALCLELLVNNGADVNF, EGKSPLHMAAIHGRFTRSQILIQNGSEIDC, YGNTPLHVAARYGHELLISTLMTNGADTAR, HDMFPLHLAVLFGFSDCCRKLLSSGQLYSI, LGRTCLHAAASGGNVECLNLLLSSGADLRR, FGRTPLHYAAANGSYQCTVTLVTAGASINE, KGCT…DPSL, QGYTAVHYAAAYGNRQNLELLLEMSFNCLED, IPVSPLHLAAYNGHCEALKTLAETLVNLDV, KGRTALYLATERGSTECVEVLTSHGASALV, RKWTPLHAAAANGNTDSLHLLIDSGERADI, HGQTPLMLAIMNGHVDCVHLLLEKGSTADA, RGRTALHRGAVTGCEDCLAALLDHDAFVLC, KGRTPIHFASACGHLEILRTLLQAALSTDP, SGYSPMHWASYSGHEDCLELLLEHNPFAYL, NPFTPLHCAVINNQDSTAEMLVEALGAKIVN, KGRTPLHAAAFADNIHGLQLLLRHQAEVDT, LGRTPLMMASENGHTAAVEFLLYQAKANITV, NKNTALHLACSKGHEKCALLILGETQDLGL, and ALQMPLHIAARNGLATVVQALLSRGATVLA.

Protein phosphatase 6 (PP6) holoenzyme is proposed to be a heterotrimeric complex formed by the catalytic subunit, a SAPS domain-containing subunit (PP6R) and an ankyrin repeat-domain containing regulatory subunit (ARS).

Its function is as follows. Putative regulatory subunit of protein phosphatase 6 (PP6) that may be involved in the recognition of phosphoprotein substrates. This is Serine/threonine-protein phosphatase 6 regulatory ankyrin repeat subunit C (ANKRD52) from Gallus gallus (Chicken).